Here is a 277-residue protein sequence, read N- to C-terminus: MGIKFTKMHGLGNDFIVLDGVNQSIQLTVKQIQKLANRHTGIGFDQCLLIESSQTEGIDFNYRIFNADGQEVGQCGNGARCIALFARYYGLTAKNKLTVATKTTLMDLIINEDNSVSVNMGVPRLAPGEIPLLADRQSPEYSLELNNGNTVNLHAISIGNPHAVLLVENIDTAPVNSLGQQISFHPQFPEQVNVGFMQIVNHEKINLRVYERGCGETIACGSGAVAAAAIARLFYNLSDKITVHLPGGDLCIQWPCPTAPIILTGPAAFVYEGTLLS.

Substrate is bound by residues Asn13, Gln46, and Asn66. The active-site Proton donor is the Cys75. Residues Gly76–Asn77, Asn160, Asn193, and Glu211–Arg212 each bind substrate. The Proton acceptor role is filled by Cys220. Gly221–Ser222 is a substrate binding site.

It belongs to the diaminopimelate epimerase family. In terms of assembly, homodimer.

The protein resides in the cytoplasm. It carries out the reaction (2S,6S)-2,6-diaminopimelate = meso-2,6-diaminopimelate. It participates in amino-acid biosynthesis; L-lysine biosynthesis via DAP pathway; DL-2,6-diaminopimelate from LL-2,6-diaminopimelate: step 1/1. Catalyzes the stereoinversion of LL-2,6-diaminopimelate (L,L-DAP) to meso-diaminopimelate (meso-DAP), a precursor of L-lysine and an essential component of the bacterial peptidoglycan. The sequence is that of Diaminopimelate epimerase from Legionella pneumophila (strain Paris).